Here is a 556-residue protein sequence, read N- to C-terminus: Formate--tetrahydrofolate ligase (556 aa).

65 to 72 (TPAGEGKT) contributes to the ATP binding site.

The protein belongs to the formate--tetrahydrofolate ligase family.

It carries out the reaction (6S)-5,6,7,8-tetrahydrofolate + formate + ATP = (6R)-10-formyltetrahydrofolate + ADP + phosphate. It functions in the pathway one-carbon metabolism; tetrahydrofolate interconversion. This is Formate--tetrahydrofolate ligase from Carboxydothermus hydrogenoformans (strain ATCC BAA-161 / DSM 6008 / Z-2901).